The chain runs to 476 residues: Cytosolic iron-sulfur assembly component 3 (476 aa).

An N-acetylalanine modification is found at Ala2. Residues Cys24, Cys71, Cys74, Cys77, Cys190, Cys246, Cys395, and Cys399 each contribute to the [4Fe-4S] cluster site.

Belongs to the NARF family. As to quaternary structure, external component of the CIA complex. In the CIA complex, interacts directly with CIAO1 and MMS19.

Its function is as follows. Component of the cytosolic iron-sulfur protein assembly (CIA) complex, a multiprotein complex that mediates the incorporation of iron-sulfur cluster into extramitochondrial Fe/S proteins. Seems to negatively regulate the level of HIF1A expression, although this effect could be indirect. The protein is Cytosolic iron-sulfur assembly component 3 of Pongo abelii (Sumatran orangutan).